Reading from the N-terminus, the 300-residue chain is Transcription elongation factor A protein 2 (300 aa).

Residues 6 to 83 (EEIARIARRL…KSWKKLLDAS (78 aa)) enclose the TFIIS N-terminal domain. Lys-58 is covalently cross-linked (Glycyl lysine isopeptide (Lys-Gly) (interchain with G-Cter in ubiquitin)). A phosphoserine mark is found at Ser-60 and Ser-101. Residues 84-131 (DAKARERRRGGSLPTSSSKEASEAQDPSRKRPELPRMPSTPRITTFPP) are disordered. Residues 103-117 (EASEAQDPSRKRPEL) show a composition bias toward basic and acidic residues. The TFIIS central domain occupies 139-255 (VRTKCREMLT…EHQMARTGGT (117 aa)). A TFIIS-type zinc finger spans residues 258-298 (DLFTCGKCRKKNCTYTQVQTRSSDEPMTTFVVCNECGNRWK). 4 residues coordinate Zn(2+): Cys-262, Cys-265, Cys-290, and Cys-293.

This sequence belongs to the TFS-II family. Interacts with the basal transcription factor GTF2B. Interacts with REXO1.

It is found in the nucleus. Necessary for efficient RNA polymerase II transcription elongation past template-encoded arresting sites. The arresting sites in DNA have the property of trapping a certain fraction of elongating RNA polymerases that pass through, resulting in locked ternary complexes. Cleavage of the nascent transcript by S-II allows the resumption of elongation from the new 3'-terminus. This chain is Transcription elongation factor A protein 2 (TCEA2), found in Bos taurus (Bovine).